We begin with the raw amino-acid sequence, 404 residues long: Cysteine desulfurase IscS (404 aa).

Pyridoxal 5'-phosphate is bound by residues 75–76, Asn-155, Gln-183, and 203–205; these read AT and SAH. Residue Lys-206 is modified to N6-(pyridoxal phosphate)lysine. Pyridoxal 5'-phosphate is bound at residue Thr-243. The Cysteine persulfide intermediate role is filled by Cys-328. Residue Cys-328 coordinates [2Fe-2S] cluster.

This sequence belongs to the class-V pyridoxal-phosphate-dependent aminotransferase family. NifS/IscS subfamily. In terms of assembly, homodimer. Forms a heterotetramer with IscU, interacts with other sulfur acceptors. The cofactor is pyridoxal 5'-phosphate.

It is found in the cytoplasm. The catalysed reaction is (sulfur carrier)-H + L-cysteine = (sulfur carrier)-SH + L-alanine. Its pathway is cofactor biosynthesis; iron-sulfur cluster biosynthesis. Functionally, master enzyme that delivers sulfur to a number of partners involved in Fe-S cluster assembly, tRNA modification or cofactor biosynthesis. Catalyzes the removal of elemental sulfur atoms from cysteine to produce alanine. Functions as a sulfur delivery protein for Fe-S cluster synthesis onto IscU, an Fe-S scaffold assembly protein, as well as other S acceptor proteins. This Neisseria meningitidis serogroup C (strain 053442) protein is Cysteine desulfurase IscS.